A 718-amino-acid polypeptide reads, in one-letter code: Polyribonucleotide nucleotidyltransferase (718 aa).

D491 and D497 together coordinate Mg(2+). The region spanning 558 to 617 is the KH domain; it reads PRMLTIKINPEKIRDVIGKGGATIRALTEETGTQIDISDDGTIVIASVDEGQAKEAQRRI. One can recognise an S1 motif domain in the interval 627–695; the sequence is GQVYDGSVLR…EKGRLRLSVK (69 aa).

Belongs to the polyribonucleotide nucleotidyltransferase family. It depends on Mg(2+) as a cofactor.

The protein resides in the cytoplasm. The enzyme catalyses RNA(n+1) + phosphate = RNA(n) + a ribonucleoside 5'-diphosphate. Involved in mRNA degradation. Catalyzes the phosphorolysis of single-stranded polyribonucleotides processively in the 3'- to 5'-direction. This Bordetella avium (strain 197N) protein is Polyribonucleotide nucleotidyltransferase.